The chain runs to 93 residues: Auxin-responsive protein SAUR26 (93 aa).

The protein belongs to the ARG7 family. In terms of assembly, interacts with PP2C-D1. In terms of tissue distribution, higher expression in thermo-responsive cultivars (e.g. cv. Alst-1, cv. Ang-0 and cv. Com-0) than in low thermo-responsive cultivars (e.g. cv. Dja-1, cv. El-0 and cv. Kon).

The protein localises to the cell membrane. Functionally, provide a mechanistic link between auxin and plasma membrane H(+)-ATPases (PM H(+)-ATPases, e.g. AHA1 and AHA2), and triggers PM H(+)-ATPases activity by promoting phosphorylation of their C-terminal autoinhibitory domain as a result of PP2C-D subfamily of type 2C phosphatases inhibition, thus leading to the acidification of the apoplast and the facilitation of solutes and water uptake to drive cell expansion. Functions as a positive effectors of cell expansion through modulation of auxin transport. Involved in thermo-responsiveness of plant architecture. Enhances plasma membrane H(+)-ATPase. Probably involved in light intensity mediated root development. In Arabidopsis thaliana (Mouse-ear cress), this protein is Auxin-responsive protein SAUR26.